We begin with the raw amino-acid sequence, 584 residues long: DNA damage-binding protein CMR1 (584 aa).

Polar residues predominate over residues 29–44; sequence SATDSISREIPNQRQA. Residues 29–90 form a disordered region; it reads SATDSISREI…TEEYQKVKEE (62 aa). Positions 59-68 are enriched in basic and acidic residues; it reads IKKEPQEPSR. Residues 76–110 are a coiled coil; the sequence is VTMENTEEYQKVKEEMEEAERKKKELEKLKSTRLF. WD repeat units follow at residues 226–267, 274–314, 373–413, 431–469, 506–549, and 553–584; these read ITHQ…DEDP, PHGR…SSEV, LHDK…KSNS, SSRLSVSSVDWNYENRLVCNGYDDTINIFDLSSESSELP, GRWV…LAHL, and EKVGAVPAVAAMHPIENWCVGGSASGKLYLFE.

Belongs to the WD repeat DDB2/WDR76 family.

Functionally, DNA-binding protein that binds to both single- and double-stranded DNA. Binds preferentially to UV-damaged DNA. May be involved in DNA-metabolic processes. The protein is DNA damage-binding protein CMR1 of Debaryomyces hansenii (strain ATCC 36239 / CBS 767 / BCRC 21394 / JCM 1990 / NBRC 0083 / IGC 2968) (Yeast).